Consider the following 1031-residue polypeptide: Serine-repeat antigen protein 6 (1031 aa).

The N-terminal stretch at 1–24 (MICPIFFLYIINVLFTQYFIKCEG) is a signal peptide. An N-linked (GlcNAc...) asparagine glycan is attached at N74. Low complexity predominate over residues 91–101 (KVVSSSESGKG). Residues 91 to 163 (KVVSSSESGK…TESSSETLNK (73 aa)) form a disordered region. The span at 104–139 (VSHTKVTSEGLSDTQPNVTQSVSSSTHTPGSLDSTM) shows a compositional bias: polar residues. The N-linked (GlcNAc...) asparagine glycan is linked to N120. Positions 140 to 158 (STEQHSSVSQSSLPTESSS) are enriched in low complexity. N449 carries an N-linked (GlcNAc...) asparagine glycan. The tract at residues 490-567 (TLPSESPSES…GDTNYVYDFD (78 aa)) is disordered. Positions 492–505 (PSESPSESSSKSDS) are enriched in low complexity. Residues 511 to 535 (NDKDKNEDKDDMSKNSKEEFKNDDK) are compositionally biased toward basic and acidic residues. N544 carries N-linked (GlcNAc...) asparagine glycosylation. The span at 554 to 564 (NINNGDTNYVY) shows a compositional bias: low complexity. The N-linked (GlcNAc...) asparagine glycan is linked to N573. Residue C644 is part of the active site. N674 carries N-linked (GlcNAc...) asparagine glycosylation. Active-site residues include H810 and N835. N-linked (GlcNAc...) asparagine glycosylation is found at N929 and N974.

Belongs to the peptidase C1 family. Just prior to merozoite egress from host erythrocytes, proteolytically cleaved by SUB1 to generate the active 75kDa form.

It is found in the parasitophorous vacuole lumen. Its subcellular location is the parasitophorous vacuole membrane. Functionally, cysteine protease which plays an essential role in merozoite egress from host erythrocytes. May cleave host SPTB/beta spectrin and ANK1/ankyrin-1 which disrupts host erythrocyte actin cytoskeleton and leads to host erythrocyte cell membrane rupture. The chain is Serine-repeat antigen protein 6 from Plasmodium falciparum (isolate 3D7).